Consider the following 266-residue polypeptide: Isoprenyl transferase (266 aa).

Residue aspartate 36 is part of the active site. Residue aspartate 36 participates in Mg(2+) binding. Residues 37 to 40, tryptophan 41, arginine 49, histidine 53, and 81 to 83 each bind substrate; these read GNGR and STE. The Proton acceptor role is filled by asparagine 84. Substrate-binding positions include tryptophan 85, arginine 87, arginine 204, and 210–212; that span reads RIS. Glutamate 223 is a Mg(2+) binding site.

This sequence belongs to the UPP synthase family. Homodimer. Requires Mg(2+) as cofactor.

Its function is as follows. Catalyzes the condensation of isopentenyl diphosphate (IPP) with allylic pyrophosphates generating different type of terpenoids. In Prochlorococcus marinus (strain SARG / CCMP1375 / SS120), this protein is Isoprenyl transferase.